A 146-amino-acid polypeptide reads, in one-letter code: Leghemoglobin 2 (146 aa).

The region spanning 2 to 146 (GFTAQQDALV…LAAAIKKAMS (145 aa)) is the Globin domain. Nitrated tyrosine is present on Tyr30. Position 45 (Ser45) interacts with heme b. At Ser45 the chain carries Phosphoserine. Residue His61 coordinates O2. Heme b contacts are provided by Lys64, His93, and Lys96. Tyr134 carries the post-translational modification Nitrated tyrosine.

This sequence belongs to the plant globin family. Monomer. Post-translationally, nitrated in effective nodules and particularly in hypoxic conditions; this mechanism may play a protective role in the symbiosis by buffering toxic peroxynitrite NO(2)(-). Nitration level decrease during nodule senescence. Phosphorylation at Ser-45 disrupts the molecular environment of its porphyrin ring oxygen binding pocket, thus leading to a reduced oxygen consumption and to the delivery of oxygen O(2) to symbiosomes. In terms of tissue distribution, specifically and strongly expressed in root nodules and at low levels in seedlings.

The protein localises to the cytoplasm. It localises to the cytosol. Its subcellular location is the nucleus. In terms of biological role, leghemoglobin that reversibly binds oxygen O(2) through a pentacoordinated heme iron. In root nodules, facilitates the diffusion of oxygen to the bacteroids while preventing the bacterial nitrogenase from being inactivated by buffering dioxygen, nitric oxide and carbon monoxide, and promoting the formation of reactive oxygen species (ROS, e.g. H(2)O(2)). This role is essential for symbiotic nitrogen fixation (SNF). The protein is Leghemoglobin 2 of Lotus japonicus (Lotus corniculatus var. japonicus).